The chain runs to 135 residues: UPF0355 protein SE_2351 (135 aa).

This sequence belongs to the UPF0355 family.

In Staphylococcus epidermidis (strain ATCC 12228 / FDA PCI 1200), this protein is UPF0355 protein SE_2351.